The following is a 375-amino-acid chain: Alanine racemase (375 aa).

The active-site Proton acceptor; specific for D-alanine is Lys35. Lys35 is subject to N6-(pyridoxal phosphate)lysine. Arg133 lines the substrate pocket. The active-site Proton acceptor; specific for L-alanine is the Tyr261. Residue Met309 participates in substrate binding.

This sequence belongs to the alanine racemase family. It depends on pyridoxal 5'-phosphate as a cofactor.

The catalysed reaction is L-alanine = D-alanine. It participates in amino-acid biosynthesis; D-alanine biosynthesis; D-alanine from L-alanine: step 1/1. Functionally, catalyzes the interconversion of L-alanine and D-alanine. May also act on other amino acids. This is Alanine racemase (alr) from Syntrophobacter fumaroxidans (strain DSM 10017 / MPOB).